Consider the following 218-residue polypeptide: NAD(P)H-quinone oxidoreductase subunit I (218 aa).

2 4Fe-4S ferredoxin-type domains span residues 55–84 (GRIH…VDWV) and 95–124 (RNYS…MTEE). The [4Fe-4S] cluster site is built by C64, C67, C70, C74, C104, C107, C110, and C114. The segment at 169–218 (MDPHDVPANQPRAGQLPAEALKSLSLQQESVQGDEGESLQDASDQDQPSG) is disordered. Residues 208–218 (QDASDQDQPSG) show a composition bias toward polar residues.

This sequence belongs to the complex I 23 kDa subunit family. NDH-1 is composed of at least 11 different subunits. [4Fe-4S] cluster is required as a cofactor.

Its subcellular location is the cellular thylakoid membrane. The catalysed reaction is a plastoquinone + NADH + (n+1) H(+)(in) = a plastoquinol + NAD(+) + n H(+)(out). It carries out the reaction a plastoquinone + NADPH + (n+1) H(+)(in) = a plastoquinol + NADP(+) + n H(+)(out). Functionally, NDH-1 shuttles electrons from an unknown electron donor, via FMN and iron-sulfur (Fe-S) centers, to quinones in the respiratory and/or the photosynthetic chain. The immediate electron acceptor for the enzyme in this species is believed to be plastoquinone. Couples the redox reaction to proton translocation, and thus conserves the redox energy in a proton gradient. This Prochlorococcus marinus (strain MIT 9313) protein is NAD(P)H-quinone oxidoreductase subunit I.